The following is a 1571-amino-acid chain: Neurexin-3 (1571 aa).

Positions 1–27 (MSFTLHSVFFTLKVSIFLGSLVGLCLG) are cleaved as a signal peptide. The region spanning 28 to 202 (LEFMGLPNQW…SVQLEAEGPC (175 aa)) is the Laminin G-like 1 domain. Residues 28 to 1496 (LEFMGLPNQW…EVIRESSSTT (1469 aa)) are Extracellular-facing. Asn-58 and Asn-105 each carry an N-linked (GlcNAc...) asparagine glycan. An EGF-like 1 domain is found at 198 to 235 (AEGPCGERPCENGGICFLLDGHPTCDCSTTGYGGTLCS). Disulfide bonds link Cys-202–Cys-213, Cys-207–Cys-222, and Cys-224–Cys-234. Laminin G-like domains lie at 258 to 440 (VATF…VFKC) and 447 to 639 (DPIN…KSSC). Asp-304, Leu-321, and Met-374 together coordinate Ca(2+). Cystine bridges form between Cys-404-Cys-440, Cys-610-Cys-639, Cys-647-Cys-658, Cys-652-Cys-667, and Cys-669-Cys-679. One can recognise an EGF-like 2 domain in the interval 643-680 (SAKQCDSYPCKNNAVCKDGWNRFICDCTGTGYWGRTCE). Laminin G-like domains are found at residues 685-857 (ILSY…IDYC) and 871-1046 (DPVT…ERGC). Ca(2+) is bound by residues Asp-732 and Leu-749. N-linked (GlcNAc...) asparagine glycosylation occurs at Asn-757. A Ca(2+)-binding site is contributed by Arg-807. Intrachain disulfides connect Cys-1018–Cys-1046, Cys-1053–Cys-1064, Cys-1058–Cys-1073, and Cys-1075–Cys-1085. One can recognise an EGF-like 3 domain in the interval 1049-1086 (PSTTCQEDSCANQGVCMQQWEGFTCDCSMTSYSGNQCN). One can recognise a Laminin G-like 6 domain in the interval 1090 to 1290 (ATYIFGKSGG…NPNIKINGSV (201 aa)). The Ca(2+) site is built by Asp-1142 and Ile-1159. Asn-1189 is a glycosylation site (N-linked (GlcNAc...) asparagine). The Ca(2+) site is built by Ile-1241 and Asn-1243. Residues Asn-1287 and Asn-1331 are each glycosylated (N-linked (GlcNAc...) asparagine). Residues 1324 to 1348 (ATTTTRKNRSTASIQPTSDDLVSSA) are disordered. Residues 1333 to 1348 (STASIQPTSDDLVSSA) are compositionally biased toward polar residues. Ser-1347 carries an O-linked (Xyl...) (heparan sulfate) serine glycan. A helical membrane pass occupies residues 1497–1517 (GMVVGIVAAAALCILILLYAM). Residues 1518–1571 (YKYRNRDEGSYQVDETRNYISNSAQSNGTLMKEKQASSKSGHKKQKNKDKEYYV) lie on the Cytoplasmic side of the membrane. The interval 1539–1571 (NSAQSNGTLMKEKQASSKSGHKKQKNKDKEYYV) is disordered.

The protein belongs to the neurexin family. As to quaternary structure, the laminin G-like domain 2 binds to NXPH1. Specific isoforms bind to alpha-dystroglycan. The cytoplasmic C-terminal region binds to CASK. Specific isoforms bind neuroligins NLGN1, NLGN2 and NLGN3. Interacts with CLSTN3. Post-translationally, O-glycosylated; contains heparan sulfate. Heparan sulfate attachment is required for synapse development by mediating interactions with neuroligins. As to expression, brain and arteries (at protein level).

The protein resides in the presynaptic cell membrane. Neuronal cell surface protein that may be involved in cell recognition and cell adhesion. May mediate intracellular signaling. This Mus musculus (Mouse) protein is Neurexin-3 (Nrxn3).